The sequence spans 301 residues: 4-diphosphocytidyl-2-C-methyl-D-erythritol kinase (301 aa).

K18 is a catalytic residue. 109–119 (PIASGIGGGSA) contributes to the ATP binding site. Residue D151 is part of the active site.

Belongs to the GHMP kinase family. IspE subfamily.

It carries out the reaction 4-CDP-2-C-methyl-D-erythritol + ATP = 4-CDP-2-C-methyl-D-erythritol 2-phosphate + ADP + H(+). It participates in isoprenoid biosynthesis; isopentenyl diphosphate biosynthesis via DXP pathway; isopentenyl diphosphate from 1-deoxy-D-xylulose 5-phosphate: step 3/6. In terms of biological role, catalyzes the phosphorylation of the position 2 hydroxy group of 4-diphosphocytidyl-2C-methyl-D-erythritol. The sequence is that of 4-diphosphocytidyl-2-C-methyl-D-erythritol kinase from Rhizobium meliloti (strain 1021) (Ensifer meliloti).